The chain runs to 1486 residues: Alsin homolog (1486 aa).

RCC1 repeat units follow at residues 147 to 201 (QGVV…MLVA), 256 to 307 (HTQL…ARTL), and 308 to 363 (DGRL…LLNA). MORN repeat units lie at residues 744–765 (CGTW…DGSV), 766–784 (YCGE…MVIP), 789–804 (YVGN…HGVY), 817–832 (YEGN…HGVM), 839–853 (YVGE…GYGV), and 863–884 (YMGM…NRGD). The VPS9 domain maps to 1333–1486 (SRKDEMYRQN…VTSRALQKIP (154 aa)).

As to expression, in the embryo, expressed in a wide range of tissues including the epidermis and the ventral nerve cord.

In terms of biological role, has guanine nucleotide exchange factor (GEF) activity towards Rab5. Promotes the exchange of GDP to GTP, converting inactive GDP-bound Rab5 into its active GTP-bound form. The sequence is that of Alsin homolog from Drosophila melanogaster (Fruit fly).